The chain runs to 117 residues: Cuticle protein CP1243 (117 aa).

A run of 4 repeats spans residues 1-17 (NYGE…LVQF), 26-43 (AEIG…HVQF), 67-84 (QPYG…NRQF), and 93-110 (VLVG…NVQF).

In terms of tissue distribution, calcified shell.

This chain is Cuticle protein CP1243, found in Cancer pagurus (Rock crab).